The chain runs to 73 residues: Large ribosomal subunit protein bL31 (73 aa).

Belongs to the bacterial ribosomal protein bL31 family. Type A subfamily. As to quaternary structure, part of the 50S ribosomal subunit.

Functionally, binds the 23S rRNA. The sequence is that of Large ribosomal subunit protein bL31 from Rhizobium rhizogenes (strain K84 / ATCC BAA-868) (Agrobacterium radiobacter).